Consider the following 221-residue polypeptide: ATP synthase subunit a 1 (221 aa).

The next 5 helical transmembrane spans lie at Leu-20–Thr-40, Tyr-78–Ile-98, Leu-108–Ala-128, Met-174–Leu-194, and Leu-196–Ala-216.

It belongs to the ATPase A chain family. As to quaternary structure, F-type ATPases have 2 components, CF(1) - the catalytic core - and CF(0) - the membrane proton channel. CF(1) has five subunits: alpha(3), beta(3), gamma(1), delta(1), epsilon(1). CF(0) has four main subunits: a, b, b' and c.

It localises to the cell inner membrane. Key component of the proton channel; it plays a direct role in the translocation of protons across the membrane. The sequence is that of ATP synthase subunit a 1 from Chlorobaculum tepidum (strain ATCC 49652 / DSM 12025 / NBRC 103806 / TLS) (Chlorobium tepidum).